Here is a 156-residue protein sequence, read N- to C-terminus: MKLHIVAVGHKMPGWIASGFDEYAKRMPPELRIELREVKPELRSGSRTADSVMAAEQQRIEAALPKNARVVALDERGRDWTTMQLAQALPAWQQDGRDVAFVIGGADGLAPALKSRAELLLRVSSLTLPHGMVRVLLAEQLYRAWSITQNHPYHRA.

S-adenosyl-L-methionine-binding positions include Leu-73, Gly-104, and 123–128; that span reads VSSLTL.

This sequence belongs to the RNA methyltransferase RlmH family. In terms of assembly, homodimer.

The protein localises to the cytoplasm. It catalyses the reaction pseudouridine(1915) in 23S rRNA + S-adenosyl-L-methionine = N(3)-methylpseudouridine(1915) in 23S rRNA + S-adenosyl-L-homocysteine + H(+). Specifically methylates the pseudouridine at position 1915 (m3Psi1915) in 23S rRNA. The sequence is that of Ribosomal RNA large subunit methyltransferase H from Burkholderia mallei (strain NCTC 10247).